Consider the following 508-residue polypeptide: UDP-N-acetylmuramoyl-L-alanyl-D-glutamate--L-lysine ligase (508 aa).

Position 47 (Ser-47) interacts with UDP-N-acetyl-alpha-D-muramoyl-L-alanyl-D-glutamate. 124–130 contacts ATP; it reads GTKGKTT. UDP-N-acetyl-alpha-D-muramoyl-L-alanyl-D-glutamate-binding positions include 168 to 169, Ser-195, and Arg-203; that span reads TT. An N6-carboxylysine modification is found at Lys-237. Residues 425–428 carry the L-lysine recognition motif motif; that stretch reads DDPA.

Belongs to the MurCDEF family. MurE subfamily. Post-translationally, carboxylation is probably crucial for Mg(2+) binding and, consequently, for the gamma-phosphate positioning of ATP.

Its subcellular location is the cytoplasm. The enzyme catalyses UDP-N-acetyl-alpha-D-muramoyl-L-alanyl-D-glutamate + L-lysine + ATP = UDP-N-acetyl-alpha-D-muramoyl-L-alanyl-gamma-D-glutamyl-L-lysine + ADP + phosphate + H(+). Its pathway is cell wall biogenesis; peptidoglycan biosynthesis. In terms of biological role, catalyzes the addition of L-lysine to the nucleotide precursor UDP-N-acetylmuramoyl-L-alanyl-D-glutamate (UMAG) in the biosynthesis of bacterial cell-wall peptidoglycan. This Enterococcus faecalis (strain ATCC 700802 / V583) protein is UDP-N-acetylmuramoyl-L-alanyl-D-glutamate--L-lysine ligase.